Here is a 179-residue protein sequence, read N- to C-terminus: Tetratricopeptide repeat protein 36 (179 aa).

TPR repeat units follow at residues 43–76, 78–110, and 115–148; these read SLQL…CPKN, SAYN…AGPK, and CQAY…GSSF.

It belongs to the TTC36 family.

The chain is Tetratricopeptide repeat protein 36 from Caenorhabditis elegans.